Consider the following 311-residue polypeptide: MKDYCAIEQIYHRPLDELLGEALQAKKLSGRNGVQFCQLLNIKSGGCSEDCKYCAQSAHYRTPIEKGALLDEEEILQAGLQAKEKGASRFCLGAAWRGLFEGETKTKKICKIISKISSLGMELCLSAGFLTEKTALMLKESGLKVYNHNLNTGPSYYPRIASTHRFEDRLQTIRIVQKVGLKLCSGGIIGMGERLKDRLEMLFCLYSLPEAPESIPINVYMPIEGTPFYGTPPLDYMDLIRMIATTRILFPLSRIRLAAGRKLLDEKTLTLCYLAGVDSIFIGEKLLTQSNVQLEKDYALLKKLNLRKEER.

In terms of domain architecture, Radical SAM core spans 32–258 (NGVQFCQLLN…LFPLSRIRLA (227 aa)). Cys-47, Cys-51, and Cys-54 together coordinate [4Fe-4S] cluster. Cys-91, Cys-124, Cys-184, and Arg-256 together coordinate [2Fe-2S] cluster.

This sequence belongs to the radical SAM superfamily. Biotin synthase family. In terms of assembly, homodimer. [4Fe-4S] cluster is required as a cofactor. It depends on [2Fe-2S] cluster as a cofactor.

The enzyme catalyses (4R,5S)-dethiobiotin + (sulfur carrier)-SH + 2 reduced [2Fe-2S]-[ferredoxin] + 2 S-adenosyl-L-methionine = (sulfur carrier)-H + biotin + 2 5'-deoxyadenosine + 2 L-methionine + 2 oxidized [2Fe-2S]-[ferredoxin]. It participates in cofactor biosynthesis; biotin biosynthesis; biotin from 7,8-diaminononanoate: step 2/2. Functionally, catalyzes the conversion of dethiobiotin (DTB) to biotin by the insertion of a sulfur atom into dethiobiotin via a radical-based mechanism. This chain is Biotin synthase, found in Methylacidiphilum infernorum (isolate V4) (Methylokorus infernorum (strain V4)).